Reading from the N-terminus, the 271-residue chain is Formamidopyrimidine-DNA glycosylase (271 aa).

Pro2 (schiff-base intermediate with DNA) is an active-site residue. The Proton donor role is filled by Glu3. Catalysis depends on Lys57, which acts as the Proton donor; for beta-elimination activity. DNA-binding residues include His90, Arg109, and Lys151. The FPG-type zinc finger occupies 236 to 270; the sequence is HVYGRGGETCTQCGNLLSEIRLGQRTTVFCSICQP. Arg260 functions as the Proton donor; for delta-elimination activity in the catalytic mechanism.

Belongs to the FPG family. In terms of assembly, monomer. Zn(2+) serves as cofactor.

The catalysed reaction is Hydrolysis of DNA containing ring-opened 7-methylguanine residues, releasing 2,6-diamino-4-hydroxy-5-(N-methyl)formamidopyrimidine.. It catalyses the reaction 2'-deoxyribonucleotide-(2'-deoxyribose 5'-phosphate)-2'-deoxyribonucleotide-DNA = a 3'-end 2'-deoxyribonucleotide-(2,3-dehydro-2,3-deoxyribose 5'-phosphate)-DNA + a 5'-end 5'-phospho-2'-deoxyribonucleoside-DNA + H(+). Functionally, involved in base excision repair of DNA damaged by oxidation or by mutagenic agents. Acts as a DNA glycosylase that recognizes and removes damaged bases. Has a preference for oxidized purines, such as 7,8-dihydro-8-oxoguanine (8-oxoG). Has AP (apurinic/apyrimidinic) lyase activity and introduces nicks in the DNA strand. Cleaves the DNA backbone by beta-delta elimination to generate a single-strand break at the site of the removed base with both 3'- and 5'-phosphates. The protein is Formamidopyrimidine-DNA glycosylase of Shewanella oneidensis (strain ATCC 700550 / JCM 31522 / CIP 106686 / LMG 19005 / NCIMB 14063 / MR-1).